A 785-amino-acid chain; its full sequence is Sexual differentiation process protein isp4 (785 aa).

The disordered stretch occupies residues 1–28; it reads MIGSINESPIEEHMNDSPSTKEKADSVD. Positions 10–26 are enriched in basic and acidic residues; it reads IEEHMNDSPSTKEKADS. 16 helical membrane-spanning segments follow: residues 94 to 114, 121 to 141, 167 to 187, 196 to 216, 264 to 284, 339 to 359, 413 to 433, 461 to 481, 490 to 510, 512 to 532, 537 to 557, 572 to 592, 611 to 631, 642 to 662, 683 to 703, and 732 to 752; these read MWTI…FFSL, LSVL…DLIF, LIVV…IILA, FGFG…YGLA, FFLY…YIFQ, LMNI…ALNF, ALAF…VILY, VPFY…MGTI, WWVI…IGIV, AITN…GYMY, LAMM…LAFA, IMFY…IGVL, YTCP…VIGP, TGLQ…WALW, GYIP…GLFF, and LSVI…PDWW.

The protein belongs to the oligopeptide OPT transporter family.

It is found in the endoplasmic reticulum membrane. This Schizosaccharomyces pombe (strain 972 / ATCC 24843) (Fission yeast) protein is Sexual differentiation process protein isp4 (isp4).